Here is a 229-residue protein sequence, read N- to C-terminus: MRRTKIVVPIMLTELTELEKVSVSDYLSADIVEWRADFLSADDIFEMAPKFFEKFKESKILFTLRTVREGGNIQVSEKKYLQILQEILKFEPDYIDVEYFSHGPSFAALKNYREKIVLSYHNFDEVPTDLTSRLIKMHEEGTAFVKVAVMPERECDVLDLLQITRDMTLEYGNHFISMAMGDLGRLSRISGYLTGSCWTFAGLENSSAPGQISLKETVEILDLLENELA.

3-dehydroquinate contacts are provided by residues 33-35 (EWR) and arginine 65. Histidine 121 functions as the Proton donor/acceptor in the catalytic mechanism. Lysine 146 serves as the catalytic Schiff-base intermediate with substrate. Residues arginine 188, serine 207, and glutamine 211 each coordinate 3-dehydroquinate.

It belongs to the type-I 3-dehydroquinase family. As to quaternary structure, homodimer.

The catalysed reaction is 3-dehydroquinate = 3-dehydroshikimate + H2O. The protein operates within metabolic intermediate biosynthesis; chorismate biosynthesis; chorismate from D-erythrose 4-phosphate and phosphoenolpyruvate: step 3/7. Involved in the third step of the chorismate pathway, which leads to the biosynthesis of aromatic amino acids. Catalyzes the cis-dehydration of 3-dehydroquinate (DHQ) and introduces the first double bond of the aromatic ring to yield 3-dehydroshikimate. The sequence is that of 3-dehydroquinate dehydratase from Lactococcus lactis subsp. cremoris (strain SK11).